The sequence spans 927 residues: Tubulin monoglycylase TTLL3 (927 aa).

The span at 35–47 (RSQPSELRTNFSS) shows a compositional bias: polar residues. Disordered regions lie at residues 35–113 (RSQP…PQPV) and 194–227 (HPPG…EENE). Over residues 216 to 226 (DATEDEDEEEN) the composition is skewed to acidic residues. One can recognise a TTL domain in the interval 345-702 (VLKLVVKLEE…DRRLDRSCDT (358 aa)). ATP contacts are provided by residues lysine 476, 482–483 (RG), 514–517 (QKYI), 527–529 (KFD), and 571–572 (CN). Arginine 482 is an a protein binding site. Residues aspartate 649, glutamate 662, and asparagine 664 each contribute to the Mg(2+) site. Position 662 (glutamate 662) interacts with ATP. Disordered stretches follow at residues 735-799 (VPVG…SGKG) and 897-927 (EEGH…KTET). Residues 752-769 (LTQQGSGESKDSGSPTHR) show a composition bias toward polar residues. Residues 776-788 (ARAESLEHTEKPE) show a composition bias toward basic and acidic residues. Positions 916-927 (LSSTEPCSKTET) are enriched in polar residues.

The cofactor is Mg(2+). As to expression, highly expressed in brain and testis. Expressed in heart, kidney, liver, lung, muscle, spleen, trachea and colon. Expressed in sperm flagellum. In the brain, specifically expressed in ependymal cilia.

The protein localises to the cytoplasm. It localises to the cytoskeleton. Its subcellular location is the cell projection. The protein resides in the cilium. It is found in the cilium axoneme. The protein localises to the flagellum axoneme. It carries out the reaction L-glutamyl-[protein] + glycine + ATP = glycyl-L-glutamyl-[protein] + ADP + phosphate + H(+). Monoglycylase which modifies alpha- and beta-tubulin, adding a single glycine on the gamma-carboxyl groups of specific glutamate residues to generate monoglycine side chains within the C-terminal tail of tubulin. Not involved in elongation step of the polyglycylation reaction. Preferentially glycylates a beta-tail peptide over the alpha-tail, although shifts its preference toward alpha-tail as beta-tail glutamylation increases. Competes with polyglutamylases for modification site on beta-tubulin substrate, thereby creating an anticorrelation between glycylation and glutamylation reactions. Together with TTLL8, mediates microtubule glycylation of primary and motile cilia, which is essential for their stability and maintenance. Involved in microtubule glycylation of primary cilia in colon which controls cell proliferation of epithelial cells and plays an essential role in colon cancer development. Together with TTLL8, glycylates sperm flagella which regulates axonemal dynein motor activity, thereby controlling flagellar beat, directional sperm swimming and male fertility. In Mus musculus (Mouse), this protein is Tubulin monoglycylase TTLL3.